The following is a 200-amino-acid chain: Cytochrome c biogenesis ATP-binding export protein CcmA (200 aa).

The ABC transporter domain maps to 1 to 200 (MRLSGRGLRC…TREMRIGAAA (200 aa)). 35 to 42 (GRNGAGKT) contributes to the ATP binding site.

Belongs to the ABC transporter superfamily. CcmA exporter (TC 3.A.1.107) family. In terms of assembly, the complex is composed of two ATP-binding proteins (CcmA) and two transmembrane proteins (CcmB).

Its subcellular location is the cell inner membrane. The catalysed reaction is heme b(in) + ATP + H2O = heme b(out) + ADP + phosphate + H(+). Its function is as follows. Part of the ABC transporter complex CcmAB involved in the biogenesis of c-type cytochromes; once thought to export heme, this seems not to be the case, but its exact role is uncertain. Responsible for energy coupling to the transport system. This Rhodopseudomonas palustris (strain HaA2) protein is Cytochrome c biogenesis ATP-binding export protein CcmA.